Here is a 58-residue protein sequence, read N- to C-terminus: Large ribosomal subunit protein bL32c (58 aa).

Disordered regions lie at residues 1-21 and 34-58; these read MAVP…SQWM and LAGR…MQPN. Residues 44–58 are compositionally biased toward low complexity; it reads QMQPTQMQPTQMQPN.

It belongs to the bacterial ribosomal protein bL32 family.

It localises to the plastid. Its subcellular location is the chloroplast. In Cyanidioschyzon merolae (strain NIES-3377 / 10D) (Unicellular red alga), this protein is Large ribosomal subunit protein bL32c.